A 422-amino-acid polypeptide reads, in one-letter code: MRKTKFWLVLSLIATSLSIFACKKDSTATKNPIPEVSKAKASTKLLNATTVATTDYELIWSDEFNSSGGFDSTKWSYADRGTVAWNKYMTSLPAYASQDGSNLVLRMDNAVVAGDPVAYHAGGVKSMGKFSMTYGKVEVRAKFTQGRGSWPAIWMMPEPATAYGGWPSCGEIDSMEHVNNESVMYHTIHNGSVTNANGGSTASKSATYNTTDYNLYTMIWSPNDIRFYVNNSLQYTYARVSGGGTQQWPFDVPFYLILNQAGGAGWPGAITNADLPFSMQVDYVRVYKLPLFSNGDFESGVIYPWTTWGGGSSVVSTDARTGTKCIRETGGETSIEQYLTGLTPNTTYRFGGYAKVSAAGQSVSIGVKNYGGTAVDATIGTTSYSNNSVTFTTGANNTTATVYFYKPLSGTVYGDDFYLEKL.

The first 46 residues, 1 to 46 (MRKTKFWLVLSLIATSLSIFACKKDSTATKNPIPEVSKAKASTKLL), serve as a signal peptide directing secretion. Positions 47-292 (NATTVATTDY…YVRVYKLPLF (246 aa)) constitute a GH16 domain. Glutamate 171 (nucleophile) is an active-site residue. Glutamate 176 functions as the Proton donor in the catalytic mechanism. The region spanning 291 to 406 (LFSNGDFESG…NTTATVYFYK (116 aa)) is the CBM-cenC domain.

It belongs to the glycosyl hydrolase 16 family.

Its subcellular location is the secreted. It catalyses the reaction Endohydrolysis of (1-&gt;4)-beta-D-galactosidic linkages in keratan sulfate.. In terms of biological role, hydrolyzes internal endo-beta-galactosyl linkages in keratan sulfate and in various neolacto-type glycosphingolipids, producing sulfated and non-sulfated disaccharides, and glucosylceramides respectivly. The protein is Keratan-sulfate endo-1,4-beta-galactosidase of Sphingobacterium multivorum.